The chain runs to 204 residues: Protein GET1 (204 aa).

Residues 1-4 are Lumenal-facing; the sequence is MPSL. The helical transmembrane segment at 5–24 threads the bilayer; sequence LLIIFVTELVVQLVNTLGAT. The Cytoplasmic portion of the chain corresponds to 25-110; the sequence is TINDLLWRIY…KFDRTLTTTR (86 aa). The stretch at 72–107 forms a coiled coil; sequence AKWAKLRRQHDKLLEDLEKKKASLEAARTKFDRTLT. A helical membrane pass occupies residues 111-131; sequence TVSTRSVQWFLPFWYSKEPMF. The Lumenal segment spans residues 132 to 155; that stretch reads WLPYGWFPYYVEWFASFPRAPMGS. Residues 156-172 form a helical membrane-spanning segment; it reads VSIVVWQWACTAVIALM. The Cytoplasmic portion of the chain corresponds to 173–204; sequence IEAATAALVYVAAKQSQKIRQPVPAQSEKKDS.

Belongs to the WRB/GET1 family. In terms of assembly, interacts with GET3.

The protein resides in the endoplasmic reticulum membrane. Required for the post-translational delivery of tail-anchored (TA) proteins to the endoplasmic reticulum. Acts as a membrane receptor for soluble GET3, which recognizes and selectively binds the transmembrane domain of TA proteins in the cytosol. This chain is Protein GET1, found in Podospora anserina (strain S / ATCC MYA-4624 / DSM 980 / FGSC 10383) (Pleurage anserina).